The sequence spans 333 residues: Fibronectin type III domain-containing protein 11 (333 aa).

The Fibronectin type-III domain maps to Pro212–Gly310. The segment at Thr307 to Arg333 is disordered.

The protein is Fibronectin type III domain-containing protein 11 of Bos taurus (Bovine).